The sequence spans 80 residues: DNA-binding protein S1FA2 (80 aa).

Residues 54 to 59 (PPRKKK) carry the Nuclear localization signal motif. Positions 55 to 70 (PRKKKPVSKKKMKREK) are enriched in basic residues. The tract at residues 55 to 80 (PRKKKPVSKKKMKREKLKQGVSAPGE) is disordered.

Belongs to the S1FA transcription factor family.

It localises to the nucleus. In terms of biological role, DNA-binding protein that specifically recognizes a negative element (S1F) within the RPS1 promoter. This is DNA-binding protein S1FA2 (S1FA2) from Oryza sativa subsp. japonica (Rice).